We begin with the raw amino-acid sequence, 460 residues long: Exodeoxyribonuclease 7 large subunit (460 aa).

This sequence belongs to the XseA family. As to quaternary structure, heterooligomer composed of large and small subunits.

Its subcellular location is the cytoplasm. The enzyme catalyses Exonucleolytic cleavage in either 5'- to 3'- or 3'- to 5'-direction to yield nucleoside 5'-phosphates.. In terms of biological role, bidirectionally degrades single-stranded DNA into large acid-insoluble oligonucleotides, which are then degraded further into small acid-soluble oligonucleotides. The polypeptide is Exodeoxyribonuclease 7 large subunit (Edwardsiella ictaluri (strain 93-146)).